We begin with the raw amino-acid sequence, 863 residues long: uncharacterized protein (863 aa).

An N-terminal signal peptide occupies residues 1-29; that stretch reads MHQSGSVSLCRSAISVLVATALYSPIALA. The Autotransporter domain maps to 595–863; it reads GVSYDTAMWS…NTQAGVVWTF (269 aa).

The protein localises to the cell outer membrane. This is an uncharacterized protein from Escherichia coli (strain K12).